The sequence spans 309 residues: Putative ankyrin repeat protein R603 (309 aa).

ANK repeat units lie at residues 53-82 (QVNGYFTYCVQKNKLDAIQYLYENNLMNPE), 83-112 (NKSQLFKIAIVHGNIDVLKLVIDYGIDVSL), 114-144 (DHFAITVCTRPISNTENIIQLLIDNGADVTS), 145-176 (NNNLPIKFAILKGTINKSVLDLLINNGADIHA), 177-206 (DEYFCAKYAAKCCYIFALKYIINLGIDVNM), 214-243 (NVLSDTAYSSNEYTYSCIKTLLENGADISF), and 245-274 (DDNDTLKMCRGSKTRNILILLLDYGFDISF).

This chain is Putative ankyrin repeat protein R603, found in Acanthamoeba polyphaga (Amoeba).